A 270-amino-acid chain; its full sequence is Release factor glutamine methyltransferase (270 aa).

Residues 112 to 116 (GTGSG), aspartate 135, tryptophan 162, and asparagine 178 contribute to the S-adenosyl-L-methionine site. 178-181 (NPPY) provides a ligand contact to substrate.

It belongs to the protein N5-glutamine methyltransferase family. PrmC subfamily.

It catalyses the reaction L-glutaminyl-[peptide chain release factor] + S-adenosyl-L-methionine = N(5)-methyl-L-glutaminyl-[peptide chain release factor] + S-adenosyl-L-homocysteine + H(+). Its function is as follows. Methylates the class 1 translation termination release factors RF1/PrfA and RF2/PrfB on the glutamine residue of the universally conserved GGQ motif. The sequence is that of Release factor glutamine methyltransferase from Bordetella pertussis (strain Tohama I / ATCC BAA-589 / NCTC 13251).